A 133-amino-acid polypeptide reads, in one-letter code: MLPAQHKLNSSMQFRTVMRKGRRAGSKTVVVHLWDSAESLDGTEKQGEVASFGGPRFGLVVSKAVGNAVVRHRTSRRLRHICASIAEKSPELLSPTHHVVIRALAGAGNATSAELERDIRYGLGKASRVRTNK.

This sequence belongs to the RnpA family. In terms of assembly, consists of a catalytic RNA component (M1 or rnpB) and a protein subunit.

It catalyses the reaction Endonucleolytic cleavage of RNA, removing 5'-extranucleotides from tRNA precursor.. Functionally, RNaseP catalyzes the removal of the 5'-leader sequence from pre-tRNA to produce the mature 5'-terminus. It can also cleave other RNA substrates such as 4.5S RNA. The protein component plays an auxiliary but essential role in vivo by binding to the 5'-leader sequence and broadening the substrate specificity of the ribozyme. The polypeptide is Ribonuclease P protein component (Corynebacterium glutamicum (strain ATCC 13032 / DSM 20300 / JCM 1318 / BCRC 11384 / CCUG 27702 / LMG 3730 / NBRC 12168 / NCIMB 10025 / NRRL B-2784 / 534)).